A 629-amino-acid chain; its full sequence is tRNA uridine 5-carboxymethylaminomethyl modification enzyme MnmG (629 aa).

13 to 18 provides a ligand contact to FAD; that stretch reads GGGHAG. 273-287 is a binding site for NAD(+); it reads GPRYCPSIEDKVNRF.

Belongs to the MnmG family. Homodimer. Heterotetramer of two MnmE and two MnmG subunits. Requires FAD as cofactor.

It localises to the cytoplasm. In terms of biological role, NAD-binding protein involved in the addition of a carboxymethylaminomethyl (cmnm) group at the wobble position (U34) of certain tRNAs, forming tRNA-cmnm(5)s(2)U34. The protein is tRNA uridine 5-carboxymethylaminomethyl modification enzyme MnmG of Shewanella pealeana (strain ATCC 700345 / ANG-SQ1).